Consider the following 293-residue polypeptide: Nucleotide-binding protein BcerKBAB4_4948 (293 aa).

ATP is bound at residue 14-21 (GMSGAGKT). A GTP-binding site is contributed by 65–68 (DLRG).

The protein belongs to the RapZ-like family.

Its function is as follows. Displays ATPase and GTPase activities. This is Nucleotide-binding protein BcerKBAB4_4948 from Bacillus mycoides (strain KBAB4) (Bacillus weihenstephanensis).